We begin with the raw amino-acid sequence, 433 residues long: uncharacterized protein (433 aa).

The protein belongs to the mimivirus R160 family.

The protein resides in the virion. This is an uncharacterized protein from Acanthamoeba polyphaga mimivirus (APMV).